Here is a 411-residue protein sequence, read N- to C-terminus: Dual-specificity RNA methyltransferase RlmN (411 aa).

Glutamate 125 acts as the Proton acceptor in catalysis. The 250-residue stretch at 131–380 (EEGRGTLCIS…IRTPRGRDIL (250 aa)) folds into the Radical SAM core domain. Cysteine 138 and cysteine 383 are disulfide-bonded. The [4Fe-4S] cluster site is built by cysteine 145, cysteine 149, and cysteine 152. Residues 209-210 (GE), serine 241, 263-265 (SLH), and asparagine 340 contribute to the S-adenosyl-L-methionine site. Cysteine 383 serves as the catalytic S-methylcysteine intermediate.

This sequence belongs to the radical SAM superfamily. RlmN family. [4Fe-4S] cluster serves as cofactor.

The protein localises to the cytoplasm. The catalysed reaction is adenosine(2503) in 23S rRNA + 2 reduced [2Fe-2S]-[ferredoxin] + 2 S-adenosyl-L-methionine = 2-methyladenosine(2503) in 23S rRNA + 5'-deoxyadenosine + L-methionine + 2 oxidized [2Fe-2S]-[ferredoxin] + S-adenosyl-L-homocysteine. It carries out the reaction adenosine(37) in tRNA + 2 reduced [2Fe-2S]-[ferredoxin] + 2 S-adenosyl-L-methionine = 2-methyladenosine(37) in tRNA + 5'-deoxyadenosine + L-methionine + 2 oxidized [2Fe-2S]-[ferredoxin] + S-adenosyl-L-homocysteine. In terms of biological role, specifically methylates position 2 of adenine 2503 in 23S rRNA and position 2 of adenine 37 in tRNAs. m2A2503 modification seems to play a crucial role in the proofreading step occurring at the peptidyl transferase center and thus would serve to optimize ribosomal fidelity. This Brucella suis biovar 1 (strain 1330) protein is Dual-specificity RNA methyltransferase RlmN.